We begin with the raw amino-acid sequence, 322 residues long: Ribonuclease Z (322 aa).

7 residues coordinate Zn(2+): His-62, His-64, Asp-66, His-67, His-143, Asp-215, and His-273. Asp-66 (proton acceptor) is an active-site residue. Basic and acidic residues predominate over residues 300–314; that stretch reads ELRRYELDPREKEPD. A disordered region spans residues 300–322; the sequence is ELRRYELDPREKEPDPVGPADES.

The protein belongs to the RNase Z family. Homodimer. It depends on Zn(2+) as a cofactor.

It carries out the reaction Endonucleolytic cleavage of RNA, removing extra 3' nucleotides from tRNA precursor, generating 3' termini of tRNAs. A 3'-hydroxy group is left at the tRNA terminus and a 5'-phosphoryl group is left at the trailer molecule.. Functionally, zinc phosphodiesterase, which displays some tRNA 3'-processing endonuclease activity. Probably involved in tRNA maturation, by removing a 3'-trailer from precursor tRNA. In Salinibacter ruber (strain DSM 13855 / M31), this protein is Ribonuclease Z.